The following is a 238-amino-acid chain: NADH-quinone oxidoreductase subunit I (238 aa).

4Fe-4S ferredoxin-type domains lie at 81–111 and 123–152; these read LVPR…IEAG and VKFV…MDSG. 8 residues coordinate [4Fe-4S] cluster: C91, C94, C97, C101, C132, C135, C138, and C142.

It belongs to the complex I 23 kDa subunit family. In terms of assembly, NDH-1 is composed of 14 different subunits. Subunits NuoA, H, J, K, L, M, N constitute the membrane sector of the complex. The cofactor is [4Fe-4S] cluster.

It localises to the cell inner membrane. It carries out the reaction a quinone + NADH + 5 H(+)(in) = a quinol + NAD(+) + 4 H(+)(out). NDH-1 shuttles electrons from NADH, via FMN and iron-sulfur (Fe-S) centers, to quinones in the respiratory chain. The immediate electron acceptor for the enzyme in this species is believed to be ubiquinone. Couples the redox reaction to proton translocation (for every two electrons transferred, four hydrogen ions are translocated across the cytoplasmic membrane), and thus conserves the redox energy in a proton gradient. The sequence is that of NADH-quinone oxidoreductase subunit I from Anaeromyxobacter sp. (strain Fw109-5).